Here is a 480-residue protein sequence, read N- to C-terminus: G-protein coupled receptor seb-2 (480 aa).

The Extracellular portion of the chain corresponds to 1 to 222; that stretch reads MNPSISTAGA…CMSNGDVEAR (222 aa). Residue N95 is glycosylated (N-linked (GlcNAc...) asparagine). Residues 223–243 form a helical membrane-spanning segment; that stretch reads ILAGLLTYSASVIFLIPAVFL. Topologically, residues 244–261 are cytoplasmic; the sequence is LTLLRPIRCQPMFILHRH. The helical transmembrane segment at 262-282 threads the bilayer; it reads LLISCLLYGAFYLITVSLFVV. The Extracellular segment spans residues 283-305; that stretch reads NDAPLSSQVFQNHLFCRLLFSIQ. The helical transmembrane segment at 306–328 threads the bilayer; that stretch reads LRYLRLTNFTWMLAEAVYLWRLL. Over 329–343 the chain is Cytoplasmic; it reads HTAQHSEGETLRSYK. A helical membrane pass occupies residues 344 to 364; the sequence is VICWGVPGVITVVYIFVRSLN. Over 365 to 386 the chain is Extracellular; the sequence is DDVGMCWIENSTVAWIEWMIIT. Residues 387–407 form a helical membrane-spanning segment; the sequence is PSLLAMGVNLLLLGLIVYILV. Residues 408–423 lie on the Cytoplasmic side of the membrane; the sequence is KKLRCDPHLERIQYRK. A helical transmembrane segment spans residues 424 to 444; sequence AVRGALMLIPVFGVQQLLTIY. Residues 445–480 lie on the Extracellular side of the membrane; it reads RFRNVCLIYRLLHKSFCRRMCSEILVITSGEAGSRS.

The protein belongs to the G-protein coupled receptor 2 family. Present in the head body-wall muscles from the L1 larval stage through to adulthood. Also expressed between L4 and the adult molt in vulval vm1 muscle cells. These cells play a role in opening the vulva during egg laying.

The protein resides in the cell membrane. Not known. Putative receptor. This Caenorhabditis elegans protein is G-protein coupled receptor seb-2.